Consider the following 403-residue polypeptide: MLKIIDAKVIVTCPGRNFVTLKITTEDGITGVGDATLNGRELSVVSFLQDHMVPSLIGRDAHQIEDIWQFFYRGSYWRGGPVAMTALAAVDMALWDIKGKVAGLPVYQLLGGACRTGVTVYGHANGETIEDTIAEAVKYKAMGYKAIRLQTGVPGLASTYGVSKDKMFYEPADNDLPTENIWSTAKYLNSVPKLFERAREVLGWDVHLLHDVHHRLTPIEAARLGKDLEPYRLFWLEDSVPAENQAGFRLIRQHTTTPLAVGEIFAHVWDAKQLIEEQLIDYLRATVLHAGGITNLKKIAAFADLHHVKTGCHGATDLSPVTMAAALHFDMSITNFGLQEYMRHTPETDAVFPHAYTFSDGMLHPGDKPGLGVDIDEDLAAKHPYKRAYLPVNRLEDGTMFNW.

Substrate-binding residues include asparagine 38 and histidine 123. Tyrosine 160 serves as the catalytic Proton donor/acceptor. Aspartate 211 contributes to the Mg(2+) binding site. Histidine 213 serves as the catalytic Proton donor/acceptor. Positions 237 and 263 each coordinate Mg(2+). The substrate site is built by glutamate 263, arginine 284, histidine 313, aspartate 317, and glutamate 340.

Belongs to the mandelate racemase/muconate lactonizing enzyme family. GalD subfamily. Mg(2+) is required as a cofactor.

It carries out the reaction D-mannonate = 2-dehydro-3-deoxy-D-gluconate + H2O. It functions in the pathway carbohydrate metabolism; pentose and glucuronate interconversion. Its function is as follows. Catalyzes the dehydration of D-mannonate. Has no detectable activity with a panel of 70 other acid sugars (in vitro). The protein is D-mannonate dehydratase CC0532 of Caulobacter vibrioides (strain ATCC 19089 / CIP 103742 / CB 15) (Caulobacter crescentus).